Reading from the N-terminus, the 323-residue chain is tRNA U34 carboxymethyltransferase (323 aa).

Carboxy-S-adenosyl-L-methionine is bound by residues Lys91, Trp105, Lys110, Gly130, 152–154 (DPT), 181–182 (IE), Met196, Tyr200, and Arg315.

This sequence belongs to the class I-like SAM-binding methyltransferase superfamily. CmoB family. Homotetramer.

The catalysed reaction is carboxy-S-adenosyl-L-methionine + 5-hydroxyuridine(34) in tRNA = 5-carboxymethoxyuridine(34) in tRNA + S-adenosyl-L-homocysteine + H(+). In terms of biological role, catalyzes carboxymethyl transfer from carboxy-S-adenosyl-L-methionine (Cx-SAM) to 5-hydroxyuridine (ho5U) to form 5-carboxymethoxyuridine (cmo5U) at position 34 in tRNAs. This chain is tRNA U34 carboxymethyltransferase, found in Salmonella paratyphi A (strain ATCC 9150 / SARB42).